Reading from the N-terminus, the 337-residue chain is Major outer membrane protein P.IB (337 aa).

Residues 1–19 form the signal peptide; sequence MKKSLIALTLAALPVAAMA.

Belongs to the Gram-negative porin family. As to quaternary structure, homotrimer.

It localises to the cell outer membrane. Functionally, serves as a slightly cation selective porin. In Neisseria lactamica, this protein is Major outer membrane protein P.IB (por).